Consider the following 207-residue polypeptide: Uracil phosphoribosyltransferase (207 aa).

Residues Arg-77, Arg-102, and 129 to 137 (DPMLATGVS) contribute to the 5-phospho-alpha-D-ribose 1-diphosphate site. Uracil is bound by residues Ile-192 and 197 to 199 (GDA). 5-phospho-alpha-D-ribose 1-diphosphate is bound at residue Asp-198.

The protein belongs to the UPRTase family. Requires Mg(2+) as cofactor.

It carries out the reaction UMP + diphosphate = 5-phospho-alpha-D-ribose 1-diphosphate + uracil. It functions in the pathway pyrimidine metabolism; UMP biosynthesis via salvage pathway; UMP from uracil: step 1/1. Its activity is regulated as follows. Allosterically activated by GTP. Functionally, catalyzes the conversion of uracil and 5-phospho-alpha-D-ribose 1-diphosphate (PRPP) to UMP and diphosphate. This Fervidobacterium nodosum (strain ATCC 35602 / DSM 5306 / Rt17-B1) protein is Uracil phosphoribosyltransferase.